Here is a 353-residue protein sequence, read N- to C-terminus: UPF0283 membrane protein YpsIP31758_1791 (353 aa).

The next 3 helical transmembrane spans lie at 71–91, 101–121, and 214–234; these read MVTAGMVILGASVIAQSVQWV, IALGATTAGGLIILAGVGSVV, and ESALMIAVSPLALVDMAFIAW.

This sequence belongs to the UPF0283 family.

Its subcellular location is the cell inner membrane. The protein is UPF0283 membrane protein YpsIP31758_1791 of Yersinia pseudotuberculosis serotype O:1b (strain IP 31758).